The chain runs to 585 residues: Arginine--tRNA ligase (585 aa).

Residues 130–140 (ANPTGPMHVGH) carry the 'HIGH' region motif.

It belongs to the class-I aminoacyl-tRNA synthetase family. In terms of assembly, monomer.

Its subcellular location is the cytoplasm. It carries out the reaction tRNA(Arg) + L-arginine + ATP = L-arginyl-tRNA(Arg) + AMP + diphosphate. This chain is Arginine--tRNA ligase, found in Methylorubrum extorquens (strain CM4 / NCIMB 13688) (Methylobacterium extorquens).